A 143-amino-acid chain; its full sequence is 3-hydroxyacyl-[acyl-carrier-protein] dehydratase FabZ (143 aa).

His-48 is an active-site residue.

It belongs to the thioester dehydratase family. FabZ subfamily.

It localises to the cytoplasm. The catalysed reaction is a (3R)-hydroxyacyl-[ACP] = a (2E)-enoyl-[ACP] + H2O. Involved in unsaturated fatty acids biosynthesis. Catalyzes the dehydration of short chain beta-hydroxyacyl-ACPs and long chain saturated and unsaturated beta-hydroxyacyl-ACPs. This chain is 3-hydroxyacyl-[acyl-carrier-protein] dehydratase FabZ, found in Roseiflexus castenholzii (strain DSM 13941 / HLO8).